Here is a 333-residue protein sequence, read N- to C-terminus: 5-formaminoimidazole-4-carboxamide-1-(beta)-D-ribofuranosyl 5'-monophosphate synthetase (333 aa).

5-amino-1-(5-phospho-beta-D-ribosyl)imidazole-4-carboxamide-binding residues include His-9 and Ser-73. The ATP-grasp domain maps to 94-324 (RNLFEWEANQ…ISREIKLAIN (231 aa)). ATP is bound by residues 124–184 (PEDI…VPMY) and Glu-206. Asn-230 contacts 5-amino-1-(5-phospho-beta-D-ribosyl)imidazole-4-carboxamide. Mg(2+) is bound by residues Glu-269 and Glu-282.

Belongs to the phosphohexose mutase family. The cofactor is Mg(2+). Mn(2+) is required as a cofactor.

It catalyses the reaction 5-amino-1-(5-phospho-beta-D-ribosyl)imidazole-4-carboxamide + formate + ATP = 5-formamido-1-(5-phospho-D-ribosyl)imidazole-4-carboxamide + ADP + phosphate. It participates in purine metabolism; IMP biosynthesis via de novo pathway; 5-formamido-1-(5-phospho-D-ribosyl)imidazole-4-carboxamide from 5-amino-1-(5-phospho-D-ribosyl)imidazole-4-carboxamide (formate route): step 1/1. Functionally, catalyzes the ATP- and formate-dependent formylation of 5-aminoimidazole-4-carboxamide-1-beta-d-ribofuranosyl 5'-monophosphate (AICAR) to 5-formaminoimidazole-4-carboxamide-1-beta-d-ribofuranosyl 5'-monophosphate (FAICAR) in the absence of folates. The sequence is that of 5-formaminoimidazole-4-carboxamide-1-(beta)-D-ribofuranosyl 5'-monophosphate synthetase from Sulfurisphaera tokodaii (strain DSM 16993 / JCM 10545 / NBRC 100140 / 7) (Sulfolobus tokodaii).